The following is a 276-amino-acid chain: uncharacterized protein (276 aa).

Residues 20 to 137 form the AB hydrolase-1 domain; the sequence is PVLIFIPGAN…PPINTFLPDS (118 aa). The disordered stretch occupies residues 57 to 76; the sequence is GESELTEPLPDSASNPDSDY.

Belongs to the AB hydrolase superfamily.

This is an uncharacterized protein from Staphylococcus aureus (strain MW2).